The following is a 397-amino-acid chain: 1-deoxy-D-xylulose 5-phosphate reductoisomerase (397 aa).

8 residues coordinate NADPH: Thr12, Gly13, Ser14, Ile15, Gly38, Lys39, Asn40, and Asn126. A 1-deoxy-D-xylulose 5-phosphate-binding site is contributed by Lys127. Glu128 is an NADPH binding site. Asp152 serves as a coordination point for Mn(2+). 1-deoxy-D-xylulose 5-phosphate contacts are provided by Ser153, Glu154, Ser188, and His211. A Mn(2+)-binding site is contributed by Glu154. Position 217 (Gly217) interacts with NADPH. 4 residues coordinate 1-deoxy-D-xylulose 5-phosphate: Ser224, Asn229, Lys230, and Glu233. Mn(2+) is bound at residue Glu233.

It belongs to the DXR family. The cofactor is Mg(2+). Mn(2+) serves as cofactor.

The enzyme catalyses 2-C-methyl-D-erythritol 4-phosphate + NADP(+) = 1-deoxy-D-xylulose 5-phosphate + NADPH + H(+). It participates in isoprenoid biosynthesis; isopentenyl diphosphate biosynthesis via DXP pathway; isopentenyl diphosphate from 1-deoxy-D-xylulose 5-phosphate: step 1/6. In terms of biological role, catalyzes the NADPH-dependent rearrangement and reduction of 1-deoxy-D-xylulose-5-phosphate (DXP) to 2-C-methyl-D-erythritol 4-phosphate (MEP). The protein is 1-deoxy-D-xylulose 5-phosphate reductoisomerase of Haemophilus influenzae (strain ATCC 51907 / DSM 11121 / KW20 / Rd).